Consider the following 170-residue polypeptide: Flavodoxin (170 aa).

Positions 4–165 constitute a Flavodoxin-like domain; the sequence is IGLFYGTQTG…RIKTWVSQLK (162 aa).

Belongs to the flavodoxin family. FMN serves as cofactor.

In terms of biological role, low-potential electron donor to a number of redox enzymes. The protein is Flavodoxin (isiB) of Synechococcus elongatus (strain ATCC 33912 / PCC 7942 / FACHB-805) (Anacystis nidulans R2).